A 132-amino-acid chain; its full sequence is Small ribosomal subunit protein uS8 (132 aa).

It belongs to the universal ribosomal protein uS8 family. Part of the 30S ribosomal subunit. Contacts proteins S5 and S12.

Its function is as follows. One of the primary rRNA binding proteins, it binds directly to 16S rRNA central domain where it helps coordinate assembly of the platform of the 30S subunit. This Syntrophotalea carbinolica (strain DSM 2380 / NBRC 103641 / GraBd1) (Pelobacter carbinolicus) protein is Small ribosomal subunit protein uS8.